Here is a 98-residue protein sequence, read N- to C-terminus: Small ribosomal subunit protein uS19 (98 aa).

Residues 77–98 (TRTFRGHAGGKAEKGGSAPKRK) form a disordered region.

The protein belongs to the universal ribosomal protein uS19 family.

Its function is as follows. Protein S19 forms a complex with S13 that binds strongly to the 16S ribosomal RNA. This is Small ribosomal subunit protein uS19 from Chlorobium luteolum (strain DSM 273 / BCRC 81028 / 2530) (Pelodictyon luteolum).